A 757-amino-acid polypeptide reads, in one-letter code: DNA endonuclease RBBP8 (757 aa).

Residues 22–45 (DLWTKLKEYHDKETQGLQVKVTKL) form an essential for binding to the MRN complex and for RPA focus formation on DNA damage region. Positions 35–84 (TQGLQVKVTKLKKERILDAQRLEEFFTKNQQLREQQKVLHETIKVLEDRL) form a coiled coil. Residues 45–160 (LKKERILDAQ…TDLESEEDVI (116 aa)) form a required for interaction with LMO4, probably by stabilizing the interaction through RPPB8 dimerization region. Residues K62 and K115 each participate in a glycyl lysine isopeptide (Lys-Gly) (interchain with G-Cter in SUMO2) cross-link. Positions 117–138 (ITELMNEKNTLQEENKKLSEQL) form a coiled coil. K193 participates in a covalent cross-link: Glycyl lysine isopeptide (Lys-Gly) (interchain with G-Cter in SUMO2). S272 carries the post-translational modification Phosphoserine. T309 carries the phosphothreonine modification. Phosphoserine is present on residues S320, S321, and S343. Residues 348–375 (GKKTHLKTVPLSNTSAPGPEKPRSKSED) are disordered. Glycyl lysine isopeptide (Lys-Gly) (interchain with G-Cter in SUMO2) cross-links involve residues K354 and K372. S373 bears the Phosphoserine mark. Glycyl lysine isopeptide (Lys-Gly) (interchain with G-Cter in SUMO2) cross-links involve residues K390, K399, and K405. Residues 407 to 417 (TSEPISEQGNI) are compositionally biased toward polar residues. The segment at 407-430 (TSEPISEQGNIGHSKDTDRDKHVV) is disordered. Residues 419–429 (HSKDTDRDKHV) are compositionally biased toward basic and acidic residues. Glycyl lysine isopeptide (Lys-Gly) (interchain with G-Cter in SUMO2) cross-links involve residues K433 and K443. A PXDLS motif region spans residues 484–488 (PLDLS). A PXDLS motif motif is present at residues 484–488 (PLDLS). The interval 503–551 (CENSKIRFRQVTLYEALKPIPRDSSSSRKALSGSCGLTKDSPEEPCLQE) is damage-recruitment motif. A Glycyl lysine isopeptide (Lys-Gly) (interchain with G-Cter in SUMO2); alternate cross-link involves residue K520. The tract at residues 524–544 (RDSSSSRKALSGSCGLTKDSP) is disordered. Glycyl lysine isopeptide (Lys-Gly) (interchain with G-Cter in SUMO2) cross-links involve residues K564 and K570. K596 participates in a covalent cross-link: Glycyl lysine isopeptide (Lys-Gly) (interchain with G-Cter in SUMO2); alternate. Residues K605, K630, and K632 each participate in a glycyl lysine isopeptide (Lys-Gly) (interchain with G-Cter in SUMO2) cross-link. A required for interaction with LMO4, probably by making physical contact with LMO4 region spans residues 633–677 (SLQNNQDVSFENIQWSIDPGADLSQYKMGVTVDDTKDGSQSRLAG). S656 is subject to Phosphoserine; by ATM. A Glycyl lysine isopeptide (Lys-Gly) (interchain with G-Cter in SUMO2) cross-link involves residue K668. Position 671 is a phosphoserine (S671). Basic and acidic residues predominate over residues 696–728 (KKQEQKGEESPNGERKMNDSLEDMFDRTTHEEY). The segment at 696-757 (KKQEQKGEES…TTTKKPNISW (62 aa)) is disordered. K711 is covalently cross-linked (Glycyl lysine isopeptide (Lys-Gly) (interchain with G-Cter in SUMO2)). S715 carries the post-translational modification Phosphoserine. Residues 747-757 (STTTKKPNISW) show a composition bias toward polar residues.

Belongs to the COM1/SAE2/CtIP family. Homotetramer; formed by antiparallel association of helical extensions protruding from the N-termini of two parallel coiled-coil dimers. Forms a dumbbell-shaped particle in which polar globular domains are held about 30 nm apart by a central rod. Homotetramerization is required for DNA-end resection and repair. Interacts (via the PXDLS motif) with CTBP1; the interaction is disrupted via binding of the adenovirus E1A to CTBP1. Component of the BRCA1-RBBP8 complex. Interacts (the Ser-321 phosphorylated form) with BRCA1 (via the C-terminal BRCT domains): the interaction occurs in the G2 phase, ubiquitinates RBBP8 and involves RBBP8 in BRCA1-dependent G2/M checkpoint control on DNA damage. Interacts with RB1. Interacts with the MRN complex. Interacts directly with MRE11; the interaction is required for efficient homologous recombination (HR) and regulation of the MRN complex. Interacts directly with RAD50. Interacts (when phosphorylated by CDK1) with NBN; promoting association with the MRN complex. Interacts with LMO4 (via the LIM zinc-binding 1 domain). Interacts with SIAH1. Interacts with RNF138. Interacts with EXD2. Interacts with CUL3 and KLHL15; this interaction leads to RBBP8 proteasomal degradation. Directly interacts with PIN1; this interaction depends upon RBBP8 phosphorylation, predominantly at Thr-309. Interacts with FZR1; this interaction leads to APC/C-mediated RBBP8 proteasomal degradation. Interacts with AUNIP; leading to recruit RBBP8 to sites of DNA damage. Interacts with SAMHD1. Interacts with HDGFL2. In terms of processing, hyperphosphorylation upon ionizing radiation results in dissociation from BRCA1. Phosphorylation by CDK1 is essential for the recruitment to DNA and the DNA repair function. Phosphorylated on Ser-321 as cells enter G2 phase. This phosphorylation is required for binding BRCA1 and for the G2/M DNA damage transition checkpoint control. Phosphorylation at Thr-309, probably catalyzed by CDK2, is required for PIN1-binding, while phosphorylation at Ser-272 serves as a PIN1 isomerization site. Phosphorylation at Thr-309 is cell-cycle dependent. It steadily increases during S phase, peaks at late S/G2 phase, and drops at G1. Phosphorylation is not required for tetramerization. Binds to DNA more strongly when dephosphorylated. Ubiquitinated. Ubiquitination at multiple sites by BRCA1 (via its N-terminal RING domain) does not lead to its proteasomal degradation but instead the ubiquitinated RBBP8 binds to chromatin following DNA damage and may play a role in G2/M checkpoint control. Ubiquitinated by RNF138 at its N-terminus. Ubiquitinated through 'Lys-48' by the E3 CUL3-KLHL15 complex; this modification leads to proteasomal degradation. Ubiquitinated by the E3 FZR1/APC/C complex; this modification leads to proteasomal degradation.

The protein resides in the nucleus. It localises to the chromosome. Functionally, endonuclease that cooperates with the MRE11-RAD50-NBN (MRN) complex in DNA-end resection, the first step of double-strand break (DSB) repair through the homologous recombination (HR) pathway. HR is restricted to S and G2 phases of the cell cycle and preferentially repairs DSBs resulting from replication fork collapse. Key determinant of DSB repair pathway choice, as it commits cells to HR by preventing classical non-homologous end-joining (NHEJ). Specifically promotes the endonuclease activity of the MRN complex to clear DNA ends containing protein adducts: recruited to DSBs by NBN following phosphorylation by CDK1, and promotes the endonuclease activity of MRE11 to clear protein-DNA adducts and generate clean double-strand break ends. Functions downstream of the MRN complex and ATM, promotes ATR activation and its recruitment to DSBs in the S/G2 phase facilitating the generation of ssDNA. Component of the BRCA1-RBBP8 complex that regulates CHEK1 activation and controls cell cycle G2/M checkpoints on DNA damage. During immunoglobulin heavy chain class-switch recombination, promotes microhomology-mediated alternative end joining (A-NHEJ) and plays an essential role in chromosomal translocations. Binds preferentially to DNA Y-junctions and to DNA substrates with blocked ends and promotes intermolecular DNA bridging. The polypeptide is DNA endonuclease RBBP8 (RBBP8) (Bos taurus (Bovine)).